The sequence spans 513 residues: Noroxomaritidine synthase 1 (513 aa).

The chain crosses the membrane as a helical span at residues 18 to 34 (ILIAIACLVVFSLLRSA). C458 provides a ligand contact to heme.

It belongs to the cytochrome P450 family. It depends on heme as a cofactor. As to expression, mostly expressed in stems, and, to a lower extent, in bulbs, roots, leaves and flowers.

The protein localises to the membrane. It carries out the reaction 4'-O-methylnorbelladine + reduced [NADPH--hemoprotein reductase] + O2 = (10bR,4aS)-noroxomaritidine + oxidized [NADPH--hemoprotein reductase] + 2 H2O + H(+). It catalyses the reaction 4'-O-methylnorbelladine + reduced [NADPH--hemoprotein reductase] + O2 = (10bS,4aR)-noroxomaritidine + oxidized [NADPH--hemoprotein reductase] + 2 H2O + H(+). It participates in alkaloid biosynthesis. Functionally, cytochrome P450 that catalyzes an intramolecular para-para' C-C phenol coupling of 4'-O-methylnorbelladine in alkaloids biosynthesis, including haemanthamine- and crinamine-type alkaloids, promising anticancer agents. Catalyzes the formation of (10bR,4aS)-noroxomaritidine and (10bS,4aR)-noroxomaritidine from 4'-O-methylnorbelladine. The chain is Noroxomaritidine synthase 1 from Narcissus pseudonarcissus (Daffodil).